Here is a 72-residue protein sequence, read N- to C-terminus: Large ribosomal subunit protein bL31 (72 aa).

The Zn(2+) site is built by Cys-16, Cys-18, Cys-38, and Cys-41.

The protein belongs to the bacterial ribosomal protein bL31 family. Type A subfamily. As to quaternary structure, part of the 50S ribosomal subunit. Zn(2+) is required as a cofactor.

Binds the 23S rRNA. In Aliivibrio salmonicida (strain LFI1238) (Vibrio salmonicida (strain LFI1238)), this protein is Large ribosomal subunit protein bL31.